Reading from the N-terminus, the 264-residue chain is Mitochondrial distribution and morphology protein 12 (264 aa).

Residues 1–232 form the SMP-LTD domain; it reads MSFDINWNKI…WPSWINLDFN (232 aa). The disordered stretch occupies residues 240-264; the sequence is ESSSSAEESLPHRDDAQDFSADARA. The span at 248–264 shows a compositional bias: basic and acidic residues; sequence SLPHRDDAQDFSADARA.

It belongs to the MDM12 family. Component of the ER-mitochondria encounter structure (ERMES) or MDM complex, composed of MMM1, MDM10, MDM12 and MDM34. An MMM1 homodimer associates with one molecule of MDM12 on each side in a pairwise head-to-tail manner, and the SMP-LTD domains of MMM1 and MDM12 generate a continuous hydrophobic tunnel for phospholipid trafficking.

It is found in the mitochondrion outer membrane. The protein localises to the endoplasmic reticulum membrane. Functionally, component of the ERMES/MDM complex, which serves as a molecular tether to connect the endoplasmic reticulum (ER) and mitochondria. Components of this complex are involved in the control of mitochondrial shape and protein biogenesis, and function in nonvesicular lipid trafficking between the ER and mitochondria. MDM12 is required for the interaction of the ER-resident membrane protein MMM1 and the outer mitochondrial membrane-resident beta-barrel protein MDM10. The MDM12-MMM1 subcomplex functions in the major beta-barrel assembly pathway that is responsible for biogenesis of all mitochondrial outer membrane beta-barrel proteins, and acts in a late step after the SAM complex. The MDM10-MDM12-MMM1 subcomplex further acts in the TOM40-specific pathway after the action of the MDM12-MMM1 complex. Essential for establishing and maintaining the structure of mitochondria and maintenance of mtDNA nucleoids. The polypeptide is Mitochondrial distribution and morphology protein 12 (Eremothecium gossypii (strain ATCC 10895 / CBS 109.51 / FGSC 9923 / NRRL Y-1056) (Yeast)).